The chain runs to 143 residues: Small ribosomal subunit protein eS19x (143 aa).

It belongs to the eukaryotic ribosomal protein eS19 family.

This Arabidopsis thaliana (Mouse-ear cress) protein is Small ribosomal subunit protein eS19x (RPS19C).